The following is a 1030-amino-acid chain: ATPase MORC2A (1030 aa).

Alanine 2 bears the N-acetylalanine mark. ATP is bound by residues asparagine 39, 87–89, and 99–105; these read SAK and QYGNGLK. Asparagine 39 lines the Mg(2+) pocket. Positions 285 to 362 form a coiled coil; that stretch reads KTRAEQEVKK…KDAKQRALKE (78 aa). Lysine 427 is an ATP binding site. The segment at 490–544 adopts a CW-type zinc-finger fold; the sequence is AMEIPTTIQCDLCLKWRTLPFQLSSVETDYPDTWVCSMNPDPEQDRCEASEQKQK. Zn(2+)-binding residues include cysteine 499, cysteine 502, cysteine 525, and cysteine 536. A disordered region spans residues 530–791; sequence DPEQDRCEAS…HPAELRKAQK (262 aa). Basic and acidic residues-rich tracts occupy residues 532 to 543 and 550 to 577; these read EQDRCEASEQKQ and LKKDPKTQEEKQKQLTEKIRQQQEKLEA. Residues 555 to 583 are a coiled coil; it reads KTQEEKQKQLTEKIRQQQEKLEALQKTTP. A Phosphothreonine modification is found at threonine 582. A Phosphoserine modification is found at serine 614. Positions 629–646 are enriched in polar residues; the sequence is PSIQTPRPSTQLRKTSVI. Glycyl lysine isopeptide (Lys-Gly) (interchain with G-Cter in SUMO2) cross-links involve residues lysine 650 and lysine 702. The segment covering 693–702 has biased composition (low complexity); sequence PPLSLIPSSK. Serine 703 is subject to Phosphoserine. Lysine 714 participates in a covalent cross-link: Glycyl lysine isopeptide (Lys-Gly) (interchain with G-Cter in SUMO2). Serine 728 carries the post-translational modification Phosphoserine. The residue at position 731 (threonine 731) is a Phosphothreonine. Phosphoserine occurs at positions 737 and 741. Residues 738–775 are a coiled coil; sequence LAVSDEEEAEEEAEKRRERCKRGKLAVKEEKKEANELS. The span at 763-772 shows a compositional bias: basic and acidic residues; that stretch reads AVKEEKKEAN. A Glycyl lysine isopeptide (Lys-Gly) (interchain with G-Cter in SUMO2) cross-link involves residue lysine 765. Phosphoserine occurs at positions 775 and 777. Over residues 779–791 the composition is skewed to basic and acidic residues; the sequence is GEDHPAELRKAQK. A Glycyl lysine isopeptide (Lys-Gly) (interchain with G-Cter in SUMO2) cross-link involves residue lysine 817. Threonine 834 is modified (phosphothreonine). Residues 837 to 849 show a composition bias toward basic and acidic residues; that stretch reads DRWVEKGSEDVRL. 2 disordered regions span residues 837 to 874 and 882 to 901; these read DRWVEKGSEDVRLMKPPSPEHQSPDTQQEGGEEEEAMV and PEPSTSDGLPIEPDTTATSP. A phosphoserine mark is found at serine 854 and serine 859. The segment covering 856 to 865 has biased composition (polar residues); sequence EHQSPDTQQE. Lysine 930 participates in a covalent cross-link: Glycyl lysine isopeptide (Lys-Gly) (interchain with G-Cter in SUMO2). A coiled-coil region spans residues 966–1011; it reads RADSRAKASEESLRTSEKKLRETEEKLQKLRTNIVALLQKVQEDID.

As to quaternary structure, homodimerizes upon ATP-binding and dissociate upon ATP hydrolysis; homodimerization is required for gene silencing. Binds histone H3 independently of the methylation status at 'Lys-9'. Interacts with HDAC4. Interacts with FAM208A/TASOR and MPHOSPH8; the interactions associate MORC2 with the HUSH complex which recruits MORC2 to heterochromatic loci. Interacts with Morc2b. In terms of processing, phosphorylated by PAK1 at Ser-737 upon DNA damage. Phosphorylation is required for ATPase activity and recruitment to damaged chromatin. As to expression, expressed in the axons and Schwann cells of peripheral nerves. Expressed in testes.

Its subcellular location is the nucleus. The protein localises to the cytoplasm. It localises to the cytosol. It is found in the chromosome. The protein resides in the nucleus matrix. It catalyses the reaction ATP + H2O = ADP + phosphate + H(+). Its activity is regulated as follows. ATPase activity is dependent of phosphorylation by PAK1 and presence of DNA. In terms of biological role, essential for epigenetic silencing by the HUSH complex. Recruited by HUSH to target site in heterochromatin, the ATPase activity and homodimerization are critical for HUSH-mediated silencing. Represses germ cell-related genes and L1 retrotransposons in collaboration with SETDB1 and the HUSH complex, the silencing is dependent of repressive epigenetic modifications, such as H3K9me3 mark. Silencing events often occur within introns of transcriptionally active genes, and lead to the down-regulation of host gene expression. During DNA damage response, regulates chromatin remodeling through ATP hydrolysis. During DNA damage response, may regulate chromatin remodeling through ATP hydrolysis. The protein is ATPase MORC2A of Mus musculus (Mouse).